The sequence spans 512 residues: MPASRLVRQVSAPRNLFGRLVAQGGFYTAGLQLGSGAVVLPVICAHQGLTWAAGLLYPAFCIGAILGNSLSPLILQRAGQLRHLLMAAISATAAALVVCNAAVPWTGVGVAAVFLATTGAGGVVTGVSSVAYTDMISSMLPAVRRGELLLTQGAAGSVLATGVTLVIVPMLAHGNEMARYHDLLWLGAAGLVCSGIAALFVGPMRSVSVTTATRMPLREIYWMGFAIARSQPWFRRYMTTYLLFVPISLGTTFFSLRAAQSNGSLHVLVILSSIGLVVGSMLWRQINRLFGVRGLLLGSALLNAAAALLCMVAESCGQWVHAWAYGTAFLLATVAAQTVVAASISWISVLAPERYRATLICVGSTLAAVEATVLGVALGGIAQKHATIWPVVVVLTLAVIAAVASLRAPTRIGVTADTSPQAATLQAYRPATPNPIHSDERSTPPDHLSVRRGQLRHVWDSRRPAPPLNRPSCRRAARRPAPGKPAAALPQPRHPAVGVREGAPLDAGQRIA.

The next 12 membrane-spanning stretches (helical) occupy residues 25 to 45, 55 to 75, 96 to 116, 123 to 143, 148 to 168, 183 to 203, 238 to 258, 263 to 283, 294 to 314, 329 to 349, 359 to 379, and 386 to 406; these read GFYT…VICA, LLYP…PLIL, LVVC…VFLA, VVTG…LPAV, LLLT…LVIV, LLWL…FVGP, MTTY…SLRA, GSLH…SMLW, GLLL…MVAE, FLLA…WISV, LICV…VALG, and ATIW…VASL. The tract at residues 428-512 is disordered; it reads YRPATPNPIH…APLDAGQRIA (85 aa).

The protein resides in the cell membrane. This is an uncharacterized protein from Mycobacterium tuberculosis (strain CDC 1551 / Oshkosh).